A 68-amino-acid polypeptide reads, in one-letter code: Large ribosomal subunit protein eL24 (68 aa).

4 residues coordinate Zn(2+): Cys-7, Cys-10, Cys-33, and Cys-37. The segment at 7 to 37 (CSYCGREFEPGTGKMFVRNDGRVLFFCSSKC) adopts a C4-type zinc-finger fold.

Belongs to the eukaryotic ribosomal protein eL24 family. As to quaternary structure, part of the 50S ribosomal subunit. Forms a cluster with proteins L3 and L14. The cofactor is Zn(2+).

Binds to the 23S rRNA. The polypeptide is Large ribosomal subunit protein eL24 (Thermococcus onnurineus (strain NA1)).